The sequence spans 688 residues: G protein-coupled receptor kinase 3 (688 aa).

The interval 1 to 190 (MADLEAVLAD…ELNIHLSMND (190 aa)) is N-terminal. In terms of domain architecture, RGS spans 54-175 (TFDKIFNQKI…MESEKFTRFC (122 aa)). Residues 191 to 453 (FSVHRIIGRG…ARELKEHIFF (263 aa)) enclose the Protein kinase domain. Residues 197–205 (IGRGGFGEV) and Lys-220 each bind ATP. Catalysis depends on Asp-317, which acts as the Proton acceptor. Residues 454-521 (KGIDWQYVYL…MISERWQQEV (68 aa)) form the AGC-kinase C-terminal domain. The PH domain occupies 558–652 (DCIMHGYMLK…WLKELTCTFN (95 aa)).

This sequence belongs to the protein kinase superfamily. AGC Ser/Thr protein kinase family. GPRK subfamily. As to quaternary structure, interacts with GIT1. Ubiquitinated. As to expression, expressed in brain cortex, hippocampus, striatum, hypothalamus, cerebellum and brainstem (at protein level).

It is found in the postsynapse. It localises to the presynapse. The enzyme catalyses [beta-adrenergic receptor] + ATP = [beta-adrenergic receptor]-phosphate + ADP + H(+). Functionally, specifically phosphorylates the agonist-occupied form of the beta-adrenergic and closely related receptors. This chain is G protein-coupled receptor kinase 3, found in Rattus norvegicus (Rat).